Here is a 180-residue protein sequence, read N- to C-terminus: Large ribosomal subunit protein uL5 (180 aa).

It belongs to the universal ribosomal protein uL5 family. Part of the 50S ribosomal subunit; part of the 5S rRNA/L5/L18/L25 subcomplex. Contacts the 5S rRNA and the P site tRNA. Forms a bridge to the 30S subunit in the 70S ribosome.

In terms of biological role, this is one of the proteins that bind and probably mediate the attachment of the 5S RNA into the large ribosomal subunit, where it forms part of the central protuberance. In the 70S ribosome it contacts protein S13 of the 30S subunit (bridge B1b), connecting the 2 subunits; this bridge is implicated in subunit movement. Contacts the P site tRNA; the 5S rRNA and some of its associated proteins might help stabilize positioning of ribosome-bound tRNAs. This Chlamydia felis (strain Fe/C-56) (Chlamydophila felis) protein is Large ribosomal subunit protein uL5.